Here is an 825-residue protein sequence, read N- to C-terminus: 5E5 antigen (825 aa).

The tract at residues 126–825 (LSRDGYETET…RPRPSPKSPR (700 aa)) is disordered. Residues 157-180 (PRAPPEPPDPGAPRPPPDPGPLPL) are compositionally biased toward pro residues. Residues 191-200 (VQVSTEQLLM) show a composition bias toward polar residues. Positions 217 to 237 (TRGDRTQEGGEKPREQREGPR) are enriched in basic and acidic residues. Residues 247 to 256 (QQEESPQQEP) are compositionally biased toward low complexity. 3 stretches are compositionally biased toward basic and acidic residues: residues 257 to 277 (SSERGDSVGEREARSPGHEGE), 315 to 342 (VPKDRGEGGREWGPEAAQEHGEAARDWT), and 392 to 406 (QEREPGPRDRVESPR). Residues 437-449 (RRPRKRRGRKGRM) are compositionally biased toward basic residues. The span at 455-477 (TTATSASATGGPAEEAGASAPEG) shows a compositional bias: low complexity. The segment covering 485-505 (GRARGPRQQARRRHGPQRRRG) has biased composition (basic residues). The segment covering 524–536 (GTTSGEQRADQSQ) has biased composition (polar residues). The span at 537–562 (TLPALAGAPTAHAHAVPGPGPAAATL) shows a compositional bias: low complexity. Positions 565-575 (RGRRGSWRGGR) are enriched in basic residues. Residues 576–588 (RGGGAGASGGGRG) show a composition bias toward gly residues. Residues 721–733 (FPPPPPTRPPPVL) show a composition bias toward pro residues. Low complexity predominate over residues 734 to 750 (LPLLRLTCAGDPGASRP).

Expressed in neurons.

The protein resides in the nucleus. In terms of biological role, might have DNA-binding ability. In Rattus norvegicus (Rat), this protein is 5E5 antigen.